The sequence spans 157 residues: SsrA-binding protein (157 aa).

Residues 126–157 are disordered; the sequence is GLGKGKQAHDKREAVKERDWQRDRARLMRDRG. Residues 132-157 are compositionally biased toward basic and acidic residues; it reads QAHDKREAVKERDWQRDRARLMRDRG.

The protein belongs to the SmpB family.

It is found in the cytoplasm. Required for rescue of stalled ribosomes mediated by trans-translation. Binds to transfer-messenger RNA (tmRNA), required for stable association of tmRNA with ribosomes. tmRNA and SmpB together mimic tRNA shape, replacing the anticodon stem-loop with SmpB. tmRNA is encoded by the ssrA gene; the 2 termini fold to resemble tRNA(Ala) and it encodes a 'tag peptide', a short internal open reading frame. During trans-translation Ala-aminoacylated tmRNA acts like a tRNA, entering the A-site of stalled ribosomes, displacing the stalled mRNA. The ribosome then switches to translate the ORF on the tmRNA; the nascent peptide is terminated with the 'tag peptide' encoded by the tmRNA and targeted for degradation. The ribosome is freed to recommence translation, which seems to be the essential function of trans-translation. The protein is SsrA-binding protein of Methylobacterium radiotolerans (strain ATCC 27329 / DSM 1819 / JCM 2831 / NBRC 15690 / NCIMB 10815 / 0-1).